We begin with the raw amino-acid sequence, 379 residues long: MNRPLRIGIVVGELSGDTLGEGFIKAIRARYPDAEFVGIGGPKMNALGCQSLFDMEELAVMGLVEVLGRLPRLLKVKAELVKYFTANPPDVFVGIDAPDFNLRLELSLKQAGIKTVHYVSPSVWAWRQNRIHGIAAATHLVLAFLPFEKAFYDKFNVPCEFIGHTLADSIPLASDKLAARQLLGLDEQRRWLAVLPGSRGSEMKMLAEPFIATCQKLQARYPDLGFVVALVNAKRRAQFEQAWQQVAPELNFVLVDDTARNVITAADAVMLASGTVALECMLLKRPMVVGYRVNAFTAFLAKRLLKTPYVSLPNILAGEELVKELLQDHCTVDNLYHEVSRLLESDNQALMDKFTEMHQWIRKDADQQAAQAVLHLIQK.

It belongs to the LpxB family.

The catalysed reaction is a lipid X + a UDP-2-N,3-O-bis[(3R)-3-hydroxyacyl]-alpha-D-glucosamine = a lipid A disaccharide + UDP + H(+). It participates in bacterial outer membrane biogenesis; LPS lipid A biosynthesis. In terms of biological role, condensation of UDP-2,3-diacylglucosamine and 2,3-diacylglucosamine-1-phosphate to form lipid A disaccharide, a precursor of lipid A, a phosphorylated glycolipid that anchors the lipopolysaccharide to the outer membrane of the cell. This chain is Lipid-A-disaccharide synthase, found in Vibrio cholerae serotype O1 (strain ATCC 39541 / Classical Ogawa 395 / O395).